The chain runs to 282 residues: 4-hydroxy-3-methylbut-2-enyl diphosphate reductase (282 aa).

Cysteine 12 is a binding site for [4Fe-4S] cluster. Residues histidine 40 and histidine 72 each contribute to the (2E)-4-hydroxy-3-methylbut-2-enyl diphosphate site. Dimethylallyl diphosphate contacts are provided by histidine 40 and histidine 72. The isopentenyl diphosphate site is built by histidine 40 and histidine 72. Cysteine 94 contacts [4Fe-4S] cluster. Position 122 (histidine 122) interacts with (2E)-4-hydroxy-3-methylbut-2-enyl diphosphate. Histidine 122 is a binding site for dimethylallyl diphosphate. Histidine 122 provides a ligand contact to isopentenyl diphosphate. Glutamate 124 serves as the catalytic Proton donor. A (2E)-4-hydroxy-3-methylbut-2-enyl diphosphate-binding site is contributed by threonine 160. Cysteine 188 provides a ligand contact to [4Fe-4S] cluster. Positions 216, 218, and 260 each coordinate (2E)-4-hydroxy-3-methylbut-2-enyl diphosphate. Positions 216, 218, and 260 each coordinate dimethylallyl diphosphate. Serine 216, asparagine 218, and serine 260 together coordinate isopentenyl diphosphate.

Belongs to the IspH family. [4Fe-4S] cluster serves as cofactor.

The catalysed reaction is isopentenyl diphosphate + 2 oxidized [2Fe-2S]-[ferredoxin] + H2O = (2E)-4-hydroxy-3-methylbut-2-enyl diphosphate + 2 reduced [2Fe-2S]-[ferredoxin] + 2 H(+). It carries out the reaction dimethylallyl diphosphate + 2 oxidized [2Fe-2S]-[ferredoxin] + H2O = (2E)-4-hydroxy-3-methylbut-2-enyl diphosphate + 2 reduced [2Fe-2S]-[ferredoxin] + 2 H(+). It participates in isoprenoid biosynthesis; dimethylallyl diphosphate biosynthesis; dimethylallyl diphosphate from (2E)-4-hydroxy-3-methylbutenyl diphosphate: step 1/1. It functions in the pathway isoprenoid biosynthesis; isopentenyl diphosphate biosynthesis via DXP pathway; isopentenyl diphosphate from 1-deoxy-D-xylulose 5-phosphate: step 6/6. In terms of biological role, catalyzes the conversion of 1-hydroxy-2-methyl-2-(E)-butenyl 4-diphosphate (HMBPP) into a mixture of isopentenyl diphosphate (IPP) and dimethylallyl diphosphate (DMAPP). Acts in the terminal step of the DOXP/MEP pathway for isoprenoid precursor biosynthesis. This is 4-hydroxy-3-methylbut-2-enyl diphosphate reductase from Geobacter sulfurreducens (strain ATCC 51573 / DSM 12127 / PCA).